A 428-amino-acid chain; its full sequence is MCIAMAPRTLLLLIXCQLVFGFNEPLNIVSHLNDDWFLFGDSRSDCTYVENNGHPKLDWLDLDPKLCNSGKISAKSGNSLFRSFHFTDFYNYTGEGDQIVFYEGVNFSPSHGFKCLAHGDNKRWMGNKARFYARVYEKMAQYRSLSFVNVSYAYGGNAKPASICKDNTLTLNNPTFISKESNYVDYYYESEANFTLEGCDEFIVPLCGFNGHSKGSSSDAANKYYTDSQSYYNMDIGVLYGFNSTLDVGNTAKDPGLDLTCRYLALTPGNYKAVSLEYLLSLPSKAICLHKTKRFMPVQVVDSRWSSIRQSDNMTAAACQLPYCFFRNTSANYSGGTHDAHHGDFHFRQLLSGLLYNVSCIAQQGAFLYNNVSSSWPAYGYGHCPTAANIGYMAPVCIYDPLPVILLGVLLGIAVLIIVFLNVLFYDG.

The N-terminal stretch at 1-19 (MCIAMAPRTLLLLIXCQLV) is a signal peptide. The interval 9-129 (TLLLLIXCQL…DNKRWMGNKA (121 aa)) is esterase domain 1. The Virion surface portion of the chain corresponds to 20–404 (FGFNEPLNIV…PVCIYDPLPV (385 aa)). Ser-42 acts as the Nucleophile in catalysis. A disulfide bridge connects residues Cys-46 and Cys-67. N-linked (GlcNAc...) asparagine; by host glycosylation is found at Asn-91, Asn-149, Asn-193, Asn-243, and Asn-313. Cys-115 and Cys-164 are joined by a disulfide. The receptor binding stretch occupies residues 130-278 (RFYARVYEKM…GNYKAVSLEY (149 aa)). 2 disulfides stabilise this stretch: Cys-199/Cys-288 and Cys-207/Cys-261. The interval 279-392 (LLSLPSKAIC…HCPTAANIGY (114 aa)) is esterase domain 2. The cysteines at positions 319 and 324 are disulfide-linked. Asn-328 and Asn-332 each carry an N-linked (GlcNAc...) asparagine; by host glycan. Catalysis depends on charge relay system residues Asp-339 and His-342. 2 N-linked (GlcNAc...) asparagine; by host glycosylation sites follow: Asn-357 and Asn-371. Cysteines 360 and 384 form a disulfide. The chain crosses the membrane as a helical span at residues 405–425 (ILLGVLLGIAVLIIVFLNVLF). The Intravirion segment spans residues 426–428 (YDG).

The protein belongs to the influenza type C/coronaviruses hemagglutinin-esterase family. As to quaternary structure, homodimer; disulfide-linked. Forms a complex with the M protein in the pre-Golgi. Associates then with S-M complex to form a ternary complex S-M-HE. N-glycosylated in the RER. In terms of processing, N-glycosylated in the host RER.

The protein localises to the virion membrane. It is found in the host cell membrane. It catalyses the reaction N-acetyl-9-O-acetylneuraminate + H2O = N-acetylneuraminate + acetate + H(+). It carries out the reaction N-acetyl-4-O-acetylneuraminate + H2O = N-acetylneuraminate + acetate + H(+). Functionally, structural protein that makes short spikes at the surface of the virus. Contains receptor binding and receptor-destroying activities. Mediates de-O-acetylation of N-acetyl-4-O-acetylneuraminic acid, which is probably the receptor determinant recognized by the virus on the surface of erythrocytes and susceptible cells. This receptor-destroying activity is important for virus release as it probably helps preventing self-aggregation and ensures the efficient spread of the progeny virus from cell to cell. May serve as a secondary viral attachment protein for initiating infection, the spike protein being the major one. May become a target for both the humoral and the cellular branches of the immune system. The polypeptide is Hemagglutinin-esterase (Mus musculus (Mouse)).